A 119-amino-acid chain; its full sequence is Large ribosomal subunit protein bL20 (119 aa).

Belongs to the bacterial ribosomal protein bL20 family.

In terms of biological role, binds directly to 23S ribosomal RNA and is necessary for the in vitro assembly process of the 50S ribosomal subunit. It is not involved in the protein synthesizing functions of that subunit. In Clostridium botulinum (strain Alaska E43 / Type E3), this protein is Large ribosomal subunit protein bL20.